A 953-amino-acid chain; its full sequence is Nucleotide-binding oligomerization domain-containing protein 1 (953 aa).

The region spanning 15 to 105 (ESHPHIQLLK…AYVDLRPWLL (91 aa)) is the CARD domain. Positions 196 to 531 (ETIFILGDAG…AFFTAFFLVL (336 aa)) constitute an NACHT domain. An ATP-binding site is contributed by 202-209 (GDAGVGKS). S-palmitoyl cysteine attachment occurs at residues C558 and C567. LRR repeat units lie at residues 632–656 (LKSL…IWML), 702–725 (FPKR…ELQP), 727–750 (FSRL…VLSE), 755–778 (YKIV…YVTK), 783–806 (CKGL…YLAL), 839–862 (HPSL…SLAR), 867–891 (NTSL…LAEM), 895–918 (NQTL…QLAD), and 923–946 (NTGI…VYED). The S-palmitoyl cysteine moiety is linked to residue C952.

The protein belongs to the NOD1-NOD2 family. In terms of assembly, homooligomer: homooligomerizes following ligand-binding, promoting RIPK2 recruitment. Interacts (via CARD domain) with RIPK2 (via CARD domain). Following RIPK2 recruitment, RIPK2 homooligomerizes via its CARD domain and forms long filaments named RIPosomes. Interacts with ARHGEF2. Interacts (via CARD domain) with ubiquitin; inhibiting interaction with RIPK2. Interacts with NLRP10 and recruits it to the cell membrane following invasive bacterial infection. Interacts with IFIH1; this interaction promotes transcription of antiviral genes and inhibition of viral replication. Interacts with IRGM; promoting NOD1 degradation. Interacts with ATG16L1. Palmitoylated. Palmitoylation is required for proper recruitment to the bacterial entry site and hence for proper signaling upon cognate peptidoglycan detection. Post-translationally, ubiquitinated. 'Lys-48'-linked polyubiquitination by RNF34 promotes proteasomal degradation and thereby negatively regulates NOD1 for instance in NF-kappa-B activation. In terms of processing, degraded via selective autophagy following interaction with IRGM. IRGM promotes NOD1-RIPK2 RIPosome recruitment to autophagosome membranes, promoting their SQSTM1/p62-dependent autophagic degradation. In terms of tissue distribution, highly expressed in adult heart, skeletal muscle, pancreas, spleen and ovary. Also detected in placenta, lung, liver, kidney, thymus, testis, small intestine and colon.

It localises to the cell membrane. The protein resides in the apical cell membrane. It is found in the basolateral cell membrane. The protein localises to the cytoplasm. Pattern recognition receptor (PRR) that detects bacterial peptidoglycan fragments and other danger signals and thus participates in both innate and adaptive immune responses. Specifically recognizes and binds gamma-D-glutamyl-meso-diaminopimelic acid (iE-DAP), a dipeptide present in peptidoglycan of Gram-negative bacteria. Preferentially binds iE-DAP in tripeptide-containing muropeptides (MurNAc-TriDAP or TriDAP). Ligand binding triggers oligomerization that facilitates the binding and subsequent activation of the proximal adapter receptor-interacting RIPK2. Following recruitment, RIPK2 undergoes 'Met-1'- (linear) and 'Lys-63'-linked polyubiquitination by E3 ubiquitin-protein ligases XIAP, BIRC2, BIRC3 and the LUBAC complex, becoming a scaffolding protein for downstream effectors, triggering activation of the NF-kappa-B and MAP kinases signaling. This in turn leads to the transcriptional activation of hundreds of genes involved in immune response. Also acts as a regulator of antiviral response elicited by dsRNA and the expression of RLR pathway members by targeting IFIH1 and TRAF3 to modulate the formation of IFIH1-MAVS and TRAF3-MAVS complexes leading to increased transcription of type I IFNs. Also acts as a regulator of autophagy via its interaction with ATG16L1, possibly by recruiting ATG16L1 at the site of bacterial entry. Besides recognizing pathogens, also involved in the endoplasmic reticulum stress response: acts by sensing and binding to the cytosolic metabolite sphingosine-1-phosphate generated in response to endoplasmic reticulum stress, initiating an inflammation process that leads to activation of the NF-kappa-B and MAP kinases signaling. In addition, plays a role in insulin trafficking in beta cells in a cell-autonomous manner. Mechanistically, upon recognizing cognate ligands, NOD1 and RIPK2 localize to insulin vesicles where they recruit RAB1A to direct insulin trafficking through the cytoplasm. Its function is as follows. In contrast to isoform 1, does not efficiently recognize and bind gamma-D-glutamyl-meso-diaminopimelic acid (iE-DAP) ligand. The chain is Nucleotide-binding oligomerization domain-containing protein 1 from Homo sapiens (Human).